Consider the following 338-residue polypeptide: Alanine racemase (338 aa).

Catalysis depends on Lys33, which acts as the Proton acceptor; specific for D-alanine. At Lys33 the chain carries N6-(pyridoxal phosphate)lysine. Arg126 contacts substrate. Tyr236 acts as the Proton acceptor; specific for L-alanine in catalysis. A substrate-binding site is contributed by Met284.

This sequence belongs to the alanine racemase family. It depends on pyridoxal 5'-phosphate as a cofactor.

It carries out the reaction L-alanine = D-alanine. Its pathway is amino-acid biosynthesis; D-alanine biosynthesis; D-alanine from L-alanine: step 1/1. Its function is as follows. Catalyzes the interconversion of L-alanine and D-alanine. May also act on other amino acids. This chain is Alanine racemase (alr), found in Aquifex aeolicus (strain VF5).